The primary structure comprises 405 residues: Chalcone synthase (405 aa).

Residue cysteine 170 is part of the active site.

This sequence belongs to the thiolase-like superfamily. Chalcone/stilbene synthases family.

It catalyses the reaction (E)-4-coumaroyl-CoA + 3 malonyl-CoA + 3 H(+) = 2',4,4',6'-tetrahydroxychalcone + 3 CO2 + 4 CoA. It functions in the pathway secondary metabolite biosynthesis; flavonoid biosynthesis. In terms of biological role, the primary product of this enzyme is 4,2',4',6'-tetrahydroxychalcone (also termed naringenin-chalcone or chalcone) which can under specific conditions spontaneously isomerize into naringenin. The chain is Chalcone synthase (CHS) from Equisetum arvense (Field horsetail).